The chain runs to 907 residues: Epidermal growth factor receptor substrate 15-like 1 (907 aa).

Residue alanine 2 is modified to N-acetylalanine. The EH 1 domain maps to glycine 15–histidine 104. Positions glycine 15–aspartate 368 are interaction with DAB2. The region spanning leucine 48–alanine 83 is the EF-hand 1 domain. Phosphotyrosine is present on tyrosine 74. Phosphoserine is present on residues serine 107 and serine 108. An EH 2 domain is found at glutamate 127–lysine 215. Residues leucine 159 to alanine 194 enclose the EF-hand 2 domain. Aspartate 172, aspartate 174, aspartate 176, histidine 178, and glutamate 183 together coordinate Ca(2+). Serine 229, serine 244, serine 253, serine 255, and serine 259 each carry phosphoserine. Residues serine 229–valine 260 are disordered. Positions serine 241–serine 255 are enriched in low complexity. EF-hand domains are found at residues alanine 272–threonine 307 and glutamine 308–lysine 341. One can recognise an EH 3 domain in the interval aspartate 273–glycine 363. A Phosphoserine modification is found at serine 360. Threonine 364 bears the Phosphothreonine mark. 2 positions are modified to phosphoserine: serine 369 and serine 375. The stretch at leucine 384–serine 551 forms a coiled coil. Serine 558 carries the phosphoserine modification. Tyrosine 562 bears the Phosphotyrosine mark. Serine 610 bears the Phosphoserine mark. Positions glutamine 611 to serine 860 are disordered. Residues aspartate 622–lysine 636 are compositionally biased toward basic and acidic residues. The span at aspartate 643–alanine 652 shows a compositional bias: polar residues. Serine 664, serine 670, serine 695, serine 715, and serine 732 each carry phosphoserine. The segment covering asparagine 682 to leucine 696 has biased composition (polar residues). Positions phenylalanine 703–serine 743 are enriched in low complexity. Residues alanine 776 to proline 790 are compositionally biased toward pro residues. At serine 791 the chain carries Phosphoserine. Residues serine 791–serine 802 are compositionally biased toward polar residues. At threonine 795 the chain carries Phosphothreonine. Residues alanine 840–serine 853 are compositionally biased toward low complexity. UIM domains are found at residues asparagine 863–arginine 882 and glutamine 889–alanine 907.

Interacts with EPS15, AGFG1/HRB and AGFG2/HRBL. Associates with the clathrin-associated adapter protein complex 2 (AP-2). Interacts with FCHO1. Interacts with FCHO2. Interacts (via EH domains) with DAB2. Interacts with UBQLN1 (via ubiquitin-like domain). Interacts with CAVIN3 (via leucine-zipper domain). Interacts with REPS2. Phosphorylated on tyrosine residues by EGFR.

The protein resides in the cell membrane. The protein localises to the nucleus. Its subcellular location is the membrane. It localises to the coated pit. In terms of biological role, seems to be a constitutive component of clathrin-coated pits that is required for receptor-mediated endocytosis. Involved in endocytosis of integrin beta-1 (ITGB1) and transferrin receptor (TFR); internalization of ITGB1 as DAB2-dependent cargo but not TFR seems to require association with DAB2. The chain is Epidermal growth factor receptor substrate 15-like 1 (Eps15l1) from Mus musculus (Mouse).